A 77-amino-acid chain; its full sequence is UPF0213 protein VNG_2274C (77 aa).

Residues 1–75 form the GIY-YIG domain; sequence MHHVYVIECS…KQLSRAQKEA (75 aa).

Belongs to the UPF0213 family.

This Halobacterium salinarum (strain ATCC 700922 / JCM 11081 / NRC-1) (Halobacterium halobium) protein is UPF0213 protein VNG_2274C.